Here is a 177-residue protein sequence, read N- to C-terminus: MTGPDEIAELVASLTREVADFPEPGVQFKDLTPLFADADGLSRVTDALAQAASGATLIAGIDARGFLLGAAVAIRLGVGVLAVRKAGKLPPPVHAQTYQLEYGTAALEIPADGVELAGRRVAIVDDVLATGGTLAATARLLTTAGADVISAGVVLELSDLGGRAAVAPLPLTALRAI.

Belongs to the purine/pyrimidine phosphoribosyltransferase family. In terms of assembly, homodimer.

The protein localises to the cytoplasm. The enzyme catalyses AMP + diphosphate = 5-phospho-alpha-D-ribose 1-diphosphate + adenine. It participates in purine metabolism; AMP biosynthesis via salvage pathway; AMP from adenine: step 1/1. Catalyzes a salvage reaction resulting in the formation of AMP, that is energically less costly than de novo synthesis. The protein is Adenine phosphoribosyltransferase of Mycobacteroides abscessus (strain ATCC 19977 / DSM 44196 / CCUG 20993 / CIP 104536 / JCM 13569 / NCTC 13031 / TMC 1543 / L948) (Mycobacterium abscessus).